The primary structure comprises 220 residues: 3-dehydroquinate dehydratase (220 aa).

Residues Ser8, 30 to 32 (ELR), and Arg63 contribute to the 3-dehydroquinate site. His114 serves as the catalytic Proton donor/acceptor. Catalysis depends on Lys140, which acts as the Schiff-base intermediate with substrate. Residues Arg174 and Gln197 each contribute to the 3-dehydroquinate site.

It belongs to the type-I 3-dehydroquinase family. Homodimer.

It carries out the reaction 3-dehydroquinate = 3-dehydroshikimate + H2O. It participates in metabolic intermediate biosynthesis; chorismate biosynthesis; chorismate from D-erythrose 4-phosphate and phosphoenolpyruvate: step 3/7. Involved in the third step of the chorismate pathway, which leads to the biosynthesis of aromatic amino acids. Catalyzes the cis-dehydration of 3-dehydroquinate (DHQ) and introduces the first double bond of the aromatic ring to yield 3-dehydroshikimate. The protein is 3-dehydroquinate dehydratase of Saccharolobus solfataricus (strain ATCC 35092 / DSM 1617 / JCM 11322 / P2) (Sulfolobus solfataricus).